Reading from the N-terminus, the 238-residue chain is CD63 antigen (238 aa).

The Cytoplasmic portion of the chain corresponds to 1 to 11; the sequence is MAVEGGMKCVK. The chain crosses the membrane as a helical span at residues 12-32; it reads FLLYVLLLAFCACAVGLIAIG. Over 33–51 the chain is Extracellular; sequence VAVQVVLKQAITHETTAGS. A helical membrane pass occupies residues 52–72; sequence LLPVVIIAVGAFLFLVAFVGC. Over 73 to 81 the chain is Cytoplasmic; sequence CGACKENYC. A helical transmembrane segment spans residues 82 to 102; that stretch reads LMITFAIFLSLIMLVEVAVAI. At 103 to 203 the chain is on the extracellular side; it reads AGYVFRDQVK…TIAIWLRKNI (101 aa). 4 N-linked (GlcNAc...) asparagine glycosylation sites follow: asparagine 116, asparagine 130, asparagine 150, and asparagine 172. Residues 204-224 traverse the membrane as a helical segment; sequence LLVAAAALGIAFVEVLGIIFS. Residues 225–238 are Cytoplasmic-facing; sequence CCLVKSIRSGYEVM. The Lysosomal targeting motif signature appears at 234-238; the sequence is GYEVM.

Belongs to the tetraspanin (TM4SF) family. In terms of assembly, interacts with TIMP1 and ITGB1 and recruits TIMP1 to ITGB1. Interacts with CD9. Identified in a complex with CD9 and ITGB3. Interacts with PMEL. Interacts with KDR/VEGFR2; identified in a complex with ITGB1 and KDR/VEGFR2 and is required to recruit KDR to ITGB1 complexes. Interacts with SYT7. In terms of processing, palmitoylated at a low, basal level in unstimulated platelets. The level of palmitoylation increases when platelets are activated by thrombin (in vitro). In terms of tissue distribution, ubiquitous. Strongly expressed in kidney. Detected in spleen, bone marrow, peripheral blood mononuclear cells and macrophages.

Its subcellular location is the cell membrane. The protein resides in the lysosome membrane. The protein localises to the late endosome membrane. It is found in the endosome. It localises to the multivesicular body. Its subcellular location is the melanosome. The protein resides in the secreted. The protein localises to the extracellular exosome. It is found in the cell surface. In terms of biological role, functions as a cell surface receptor for TIMP1 and plays a role in the activation of cellular signaling cascades. Plays a role in the activation of ITGB1 and integrin signaling, leading to the activation of AKT, FAK/PTK2 and MAP kinases. Promotes cell survival, reorganization of the actin cytoskeleton, cell adhesion, spreading and migration, via its role in the activation of AKT and FAK/PTK2. Plays a role in VEGFA signaling via its role in regulating the internalization of KDR/VEGFR2. Plays a role in intracellular vesicular transport processes, and is required for normal trafficking of the PMEL luminal domain that is essential for the development and maturation of melanocytes. Plays a role in the adhesion of leukocytes onto endothelial cells via its role in the regulation of SELP trafficking. May play a role in mast cell degranulation in response to Ms4a2/FceRI stimulation, but not in mast cell degranulation in response to other stimuli. The sequence is that of CD63 antigen (Cd63) from Mus musculus (Mouse).